The chain runs to 146 residues: Myoglobin (146 aa).

The 139-residue stretch at 2-140 folds into the Globin domain; it reads ADLDAVLKCW…VIADLEANYK (139 aa). H59 contacts nitrite. H59 contributes to the O2 binding site. H88 contacts heme b.

This sequence belongs to the globin family. As to quaternary structure, monomeric.

The protein resides in the cytoplasm. Its subcellular location is the sarcoplasm. The catalysed reaction is Fe(III)-heme b-[protein] + nitric oxide + H2O = Fe(II)-heme b-[protein] + nitrite + 2 H(+). The enzyme catalyses H2O2 + AH2 = A + 2 H2O. In terms of biological role, monomeric heme protein which primary function is to store oxygen and facilitate its diffusion within muscle tissues. Reversibly binds oxygen through a pentacoordinated heme iron and enables its timely and efficient release as needed during periods of heightened demand. Depending on the oxidative conditions of tissues and cells, and in addition to its ability to bind oxygen, it also has a nitrite reductase activity whereby it regulates the production of bioactive nitric oxide. Under stress conditions, like hypoxia and anoxia, it also protects cells against reactive oxygen species thanks to its pseudoperoxidase activity. This chain is Myoglobin (mb), found in Katsuwonus pelamis (Skipjack tuna).